Reading from the N-terminus, the 342-residue chain is tRNA dimethylallyltransferase (342 aa).

Residue 39–46 coordinates ATP; it reads GPTGSGKT. 41–46 contributes to the substrate binding site; that stretch reads TGSGKT. Residues 64-67 are interaction with substrate tRNA; it reads DSMQ.

This sequence belongs to the IPP transferase family. Monomer. Requires Mg(2+) as cofactor.

The catalysed reaction is adenosine(37) in tRNA + dimethylallyl diphosphate = N(6)-dimethylallyladenosine(37) in tRNA + diphosphate. In terms of biological role, catalyzes the transfer of a dimethylallyl group onto the adenine at position 37 in tRNAs that read codons beginning with uridine, leading to the formation of N6-(dimethylallyl)adenosine (i(6)A). The chain is tRNA dimethylallyltransferase from Chlamydia caviae (strain ATCC VR-813 / DSM 19441 / 03DC25 / GPIC) (Chlamydophila caviae).